The chain runs to 559 residues: Alpha-(1,6)-fucosyltransferase (559 aa).

The Cytoplasmic portion of the chain corresponds to 1–4 (MLKC). The helical; Signal-anchor for type II membrane protein transmembrane segment at 5-24 (IAAVGTVVWMTMFLFLYSQL) threads the bilayer. Residues 25–559 (SNNQSGGDSI…RKFKFEALLD (535 aa)) lie on the Lumenal side of the membrane. N27 carries N-linked (GlcNAc...) asparagine glycosylation. Basic and acidic residues predominate over residues 63–74 (QERNDQHKKIME). The segment at 63 to 90 (QERNDQHKKIMEQSHQLPPNPENPSLPK) is disordered. Residues 80–90 (PPNPENPSLPK) show a composition bias toward pro residues. N134 is a glycosylation site (N-linked (GlcNAc...) asparagine). 3 disulfides stabilise this stretch: C188–C251, C196–C214, and C202–C206. Residues 190-480 (EAKTLVCNLD…ADDGSKFHSL (291 aa)) form the GT23 domain. Positions 351–352 (RR) are important for donor substrate binding. A disulfide bridge connects residues C452 and C459. The SH3 domain occupies 489–550 (QQAHEVIVIE…PSYKVVNDWR (62 aa)).

It belongs to the glycosyltransferase 23 family. Mn(2+) is required as a cofactor. The cofactor is Mg(2+).

The protein resides in the golgi apparatus. Its subcellular location is the golgi stack membrane. It carries out the reaction N(4)-{beta-D-GlcNAc-(1-&gt;2)-alpha-D-Man-(1-&gt;3)-[beta-D-GlcNAc-(1-&gt;2)-alpha-D-Man-(1-&gt;6)]-beta-D-Man-(1-&gt;4)-beta-D-GlcNAc-(1-&gt;4)-beta-D-GlcNAc}-L-asparaginyl-[protein] + GDP-beta-L-fucose = an N(4)-{beta-D-GlcNAc-(1-&gt;2)-alpha-D-Man-(1-&gt;3)-[beta-D-GlcNAc-(1-&gt;2)-alpha-D-Man-(1-&gt;6)]-beta-D-Man-(1-&gt;4)-beta-D-GlcNAc-(1-&gt;4)-[alpha-L-Fuc-(1-&gt;6)]-beta-D-GlcNAc}-L-asparaginyl-[protein] + GDP + H(+). The protein operates within protein modification; protein glycosylation. Inhibited by Fe(3+), Ni(2+) and Cu(2+). Its function is as follows. Catalyzes the addition of fucose in alpha 1-6 linkage to the first GlcNAc residue, next to the peptide chains in N-glycans. The addition is prevented if the GlcNAc residue is already fucosylated. Involved in susceptibility to the nematotoxic C.cinerea galectin Cgl2, likely by contributing to the synthesis of core alpha-1,6-fucosylated N-glycans to which Cgl2 binds. This chain is Alpha-(1,6)-fucosyltransferase, found in Caenorhabditis elegans.